The following is a 540-amino-acid chain: Peptide chain release factor 3 (540 aa).

Positions 14-283 (ELRRNFAIIS…YFLNYALKPG (270 aa)) constitute a tr-type G domain. Residues 23-30 (SHPDAGKT), 91-95 (DTPGH), and 145-148 (NKLD) contribute to the GTP site.

Belongs to the TRAFAC class translation factor GTPase superfamily. Classic translation factor GTPase family. PrfC subfamily.

Its subcellular location is the cytoplasm. Increases the formation of ribosomal termination complexes and stimulates activities of RF-1 and RF-2. It binds guanine nucleotides and has strong preference for UGA stop codons. It may interact directly with the ribosome. The stimulation of RF-1 and RF-2 is significantly reduced by GTP and GDP, but not by GMP. In Trichormus variabilis (strain ATCC 29413 / PCC 7937) (Anabaena variabilis), this protein is Peptide chain release factor 3.